The primary structure comprises 72 residues: uncharacterized protein (72 aa).

Belongs to the asfivirus I73R family.

Its subcellular location is the virion. This is an uncharacterized protein from Ornithodoros (relapsing fever ticks).